Reading from the N-terminus, the 177-residue chain is Large ribosomal subunit protein uL10 (177 aa).

This sequence belongs to the universal ribosomal protein uL10 family. Part of the ribosomal stalk of the 50S ribosomal subunit. The N-terminus interacts with L11 and the large rRNA to form the base of the stalk. The C-terminus forms an elongated spine to which L12 dimers bind in a sequential fashion forming a multimeric L10(L12)X complex.

Functionally, forms part of the ribosomal stalk, playing a central role in the interaction of the ribosome with GTP-bound translation factors. The sequence is that of Large ribosomal subunit protein uL10 from Leptospira biflexa serovar Patoc (strain Patoc 1 / Ames).